The primary structure comprises 503 residues: Transcription termination/antitermination protein NusA (503 aa).

The S1 motif domain occupies 139-203 (GEIINGIVKR…KGPQIFLSRV (65 aa)). The KH domain occupies 308-378 (RHKVEVVVSQ…LDVEEVIGQL (71 aa)).

It belongs to the NusA family. As to quaternary structure, monomer. Binds directly to the core enzyme of the DNA-dependent RNA polymerase and to nascent RNA.

Its subcellular location is the cytoplasm. In terms of biological role, participates in both transcription termination and antitermination. The chain is Transcription termination/antitermination protein NusA from Rickettsia conorii (strain ATCC VR-613 / Malish 7).